The primary structure comprises 295 residues: Ribosomal protein L11 methyltransferase (295 aa).

S-adenosyl-L-methionine-binding residues include Thr145, Gly166, Asp188, and Asn230.

It belongs to the methyltransferase superfamily. PrmA family.

Its subcellular location is the cytoplasm. It carries out the reaction L-lysyl-[protein] + 3 S-adenosyl-L-methionine = N(6),N(6),N(6)-trimethyl-L-lysyl-[protein] + 3 S-adenosyl-L-homocysteine + 3 H(+). Its function is as follows. Methylates ribosomal protein L11. The protein is Ribosomal protein L11 methyltransferase of Pectobacterium atrosepticum (strain SCRI 1043 / ATCC BAA-672) (Erwinia carotovora subsp. atroseptica).